A 425-amino-acid chain; its full sequence is Histidine--tRNA ligase 1 (425 aa).

This sequence belongs to the class-II aminoacyl-tRNA synthetase family. Homodimer.

The protein localises to the cytoplasm. It catalyses the reaction tRNA(His) + L-histidine + ATP = L-histidyl-tRNA(His) + AMP + diphosphate + H(+). This chain is Histidine--tRNA ligase 1, found in Bacillus thuringiensis subsp. konkukian (strain 97-27).